Reading from the N-terminus, the 281-residue chain is Energy-coupling factor transporter ATP-binding protein EcfA1 (281 aa).

An ABC transporter domain is found at 6–245; the sequence is IKSEDLVFKY…VEKIKSIGLD (240 aa). Position 44-51 (44-51) interacts with ATP; sequence GHNGSGKS.

This sequence belongs to the ABC transporter superfamily. Energy-coupling factor EcfA family. Forms a stable energy-coupling factor (ECF) transporter complex composed of 2 membrane-embedded substrate-binding proteins (S component), 2 ATP-binding proteins (A component) and 2 transmembrane proteins (T component).

Its subcellular location is the cell membrane. Its function is as follows. ATP-binding (A) component of a common energy-coupling factor (ECF) ABC-transporter complex. Unlike classic ABC transporters this ECF transporter provides the energy necessary to transport a number of different substrates. This chain is Energy-coupling factor transporter ATP-binding protein EcfA1, found in Clostridium perfringens (strain ATCC 13124 / DSM 756 / JCM 1290 / NCIMB 6125 / NCTC 8237 / Type A).